Here is a 510-residue protein sequence, read N- to C-terminus: 2,3-bisphosphoglycerate-independent phosphoglycerate mutase (510 aa).

Residues D12 and S62 each coordinate Mn(2+). The active-site Phosphoserine intermediate is S62. Substrate contacts are provided by residues H123, 153–154 (RD), R185, R191, 261–264 (RPDR), and K336. Mn(2+) is bound by residues D403, H407, D444, H445, and H462.

This sequence belongs to the BPG-independent phosphoglycerate mutase family. As to quaternary structure, monomer. Mn(2+) is required as a cofactor.

The enzyme catalyses (2R)-2-phosphoglycerate = (2R)-3-phosphoglycerate. The protein operates within carbohydrate degradation; glycolysis; pyruvate from D-glyceraldehyde 3-phosphate: step 3/5. Essential for rapid growth and for sporulation. Catalyzes the interconversion of 2-phosphoglycerate and 3-phosphoglycerate. In Priestia megaterium (strain ATCC 12872 / QMB1551) (Bacillus megaterium), this protein is 2,3-bisphosphoglycerate-independent phosphoglycerate mutase.